The primary structure comprises 207 residues: Nitrophorin-1 (207 aa).

Residues 1–23 form the signal peptide; sequence MKSYTALLAVAILCLFAAVGVSG. 2 disulfide bridges follow: C25–C145 and C64–C194. A heme-binding site is contributed by H82.

The protein belongs to the calycin superfamily. Nitrophorin family. Salivary gland (at protein level).

It localises to the secreted. Its function is as follows. Heme-based protein that deliver nitric oxide gas (NO) to the victim while feeding, resulting in vasodilation and inhibition of platelet aggregation. Reversibly binds nitric oxide (NO). Also binds tightly to histamine, which is released by the host to induce wound healing. This Rhodnius prolixus (Triatomid bug) protein is Nitrophorin-1.